The sequence spans 500 residues: Hexokinase-3 (500 aa).

The chain crosses the membrane as a helical span at residues 4 to 24 (VGLGVAVGCAAVTCAIAAALV). The Hexokinase domain maps to 35 to 487 (RRAVALLREF…SGVGAALLAA (453 aa)). Residues 90-222 (SGSEEGVYYS…GLNVRVTALV (133 aa)) form a hexokinase small subdomain region. The ADP site is built by glycine 104, threonine 105, and asparagine 106. Threonine 188, lysine 189, asparagine 223, and aspartate 224 together coordinate D-glucose. Residues 223 to 476 (NDTVGTLALG…RNVTLRVTED (254 aa)) are hexokinase large subdomain. Residue serine 247 participates in ADP binding. Asparagine 250, glutamate 278, and glutamate 309 together coordinate D-glucose. Glycine 441 contacts ADP.

Belongs to the hexokinase family. As to expression, expressed in roots, leaves, flowers, immature seeds and seed coat. Expressed in young shoots, tiller buds, endosperm seven days after fertilization, and interconnecting tissues such as pulvini and nodes.

The protein localises to the mitochondrion outer membrane. The enzyme catalyses a D-hexose + ATP = a D-hexose 6-phosphate + ADP + H(+). The catalysed reaction is D-fructose + ATP = D-fructose 6-phosphate + ADP + H(+). It catalyses the reaction D-glucose + ATP = D-glucose 6-phosphate + ADP + H(+). Its pathway is carbohydrate metabolism; hexose metabolism. The protein operates within carbohydrate degradation; glycolysis; D-glyceraldehyde 3-phosphate and glycerone phosphate from D-glucose: step 1/4. In terms of biological role, fructose and glucose phosphorylating enzyme. Involved in the regulation of cell expansion in spikelet hulls, grain size, and gibberellin biosynthesis and homeostasis. The protein is Hexokinase-3 of Oryza sativa subsp. japonica (Rice).